The primary structure comprises 310 residues: MEGFSPPINTAQVDAKTKLDEKVDYSNLPCPVLYEELNREATMALKPELFEGFRLDYNKSLNQKFFLSHSILMGPTEVPNPTPSSEIIKIPTANYDFGAGFIDPKLYLIGRITTDGRLNARAKFDLTDNFSVKANALLTDEEDKSQGHLVIDYKGSDYRTQLQLGNNSVYAANYIQHVTPHLSLGGEAFWLGQQLMSGVGYAARYETDKTVASGQIASTGVAVMNYVHKVSEKLSFATDFIYNYLSRDVTASVGYDLITRQSRLRGKVDSNGVVAAYLEEQLPIGLRFLLSAEVDHVKKDYKFGFGVNAF.

Methionine 1 is modified (N-acetylmethionine).

Belongs to the Tom40 family. Forms part of the preprotein translocase complex of the outer mitochondrial membrane (TOM complex) which consists of at least 6 different proteins (TOM5, TOM6, TOM7, TOM20, TOM22/TOM9 and TOM40). Present in a large lipid-enriched complex called mitochondrial transmembrane lipoprotein (MTL) complex made of proteins located in the two mitochondrial membranes, including the TOM complex and the core components of the MICOS complex and containing at least digalactosyldiacylglycerol (DGDG). Binds to MIC60. Component of a mitochondrial large protein complex that contains, at least, MIC60, DGS1, TOM40, TOM20 proteins, and petC/RISP. As to expression, expressed in roots, flowers, young cotyledons and leaves.

The protein resides in the mitochondrion outer membrane. Functionally, central component of the receptor complex responsible for the recognition and translocation of cytosolically synthesized mitochondrial preproteins. Together with TOM22 functions as the transit peptide receptor at the surface of the mitochondrion outer membrane and facilitates the movement of preproteins into the translocation pore. Directly involved in the pore formation. In Arabidopsis thaliana (Mouse-ear cress), this protein is Probable mitochondrial import receptor subunit TOM40-2.